The primary structure comprises 91 residues: Small ribosomal subunit protein uS19 (91 aa).

The protein belongs to the universal ribosomal protein uS19 family.

In terms of biological role, protein S19 forms a complex with S13 that binds strongly to the 16S ribosomal RNA. The polypeptide is Small ribosomal subunit protein uS19 (Dechloromonas aromatica (strain RCB)).